A 1423-amino-acid polypeptide reads, in one-letter code: MVAVDSTFPSHGSSYSSRRKKVSALEPNYFGSMCMGVYSDDVSISAREVAQDYSCDSCGDLATVSSACCNFDELCGLDSALEMGCRSNEDCRAGQEASGSGIASGLDKSVPGYTMYASGWMYGNQQGQMCGPYTQQQLYDGLSTNFLPEDLLVYPIINGYTANSVPLKYFKQFPDHVATGFAYLQNGIISVAPSVTSFPPSSSNATVHQDEIQTEHATSATHLISHQTMPPQTSSNGSVLDQLTLNHEESNMLASFLSLGNEHACWFLVDGEGRNHGPHSILELFSWQQHGYVSDAALIRDGENKLRPITLASLIGVWRVKCGDANCDEPVTGVNFISEVSEELSVHLQSGIMKIARRALLDEIISSVISDFLKAKKSDEHLKSYPPTSAVESISSRVINAEKSVVSNTESAGCKNTMNEGGHSSIAAESSKYTKSVGSIENFQTSCSAVCRTLHHHCMQIMWNAVFYDTVATHSSCWRKNKIWFRSSDISTVNYCKGSHTKYSDKPESFESFTCRVDSSSSKTAYSDEFDLATNGARVRGLSSDTYGTESVIASISEHVENELFLSLKTHLTDYTSILIKDGANNTTSSARDGKMHEGSFREQYNLEGSSKKKNGLNVVPAKLRFSNDFSDSQRLLQEGESSEQITSEDIIANIFSTALETSDIPVNDELDALAIHEPPPPGCESNINMPCLRYKYQPVRSKESIPEIKAYVSMALCRQKLHNDVMRDWKSLFLKCYLNEFLASLKGSHQVSRKETLALKKRKTVTRNKKLVQSNISNQTAEKLRKPCVGASEKVLVKRSKKLSDSHSMKEVLKVDTPSIDLSVRKPSQQKMRNTDRRDHCIIKDATKLHKEKVGKDAFSKVICDKSQDLEMEDEFDDALLITRLRRISRNKTKELRECRNAAKSCEEISVTAEESEETVDCKDHEESLSNKPSQKVKKAHTSKLKRKNLSDARDEGTKSCNGAVKSFTEISGKEGDTESLGLAISDKVSHQNLSKRRKSKIALFLFPGFENTSRKCFTKLLSPEDAAKNGQDMSNPTGNPPRLAEGKKFVEKSACSISQKGRKSSQSSILKRKHQLDEKISNVPSRRRLSLSSTDSEDAVIKEDYDVRNEEKLPCHTSDKLQKGPNKLIRRRKPLAKHTTERSPIKDLSVDDGRPKPIALKPLEKLSSKPSKKKLFLSIPKSDGCARTSINGWHWHAWSLKASAEERARVRGSSCVHMQHFGSKSSLTQNVLSARTNRAKLRNLLAAADGADVLKMSQLKARKKHLRFQQSKIHDWGLVALEPIEAEDFVIEYVGELIRSSISEIRERQYEKMGIGSSYLFRLDDGYVLDATKRGGIARFINHSCEPNCYTKIISVEGKKKIFIYAKRHIDAGEEISYNYKFPLEDDKIPCNCGAPNVYCFCEQVPWIAKLKRRTWFSRRN.

The GYF domain maps to 263 to 312 (HACWFLVDGEGRNHGPHSILELFSWQQHGYVSDAALIRDGENKLRPITLA). Disordered regions lie at residues 923 to 960 (CKDHEESLSNKPSQKVKKAHTSKLKRKNLSDARDEGTK), 1057 to 1097 (CSIS…SSTD), and 1115 to 1158 (LPCH…GRPK). Residues 936-949 (QKVKKAHTSKLKRK) are compositionally biased toward basic residues. A compositionally biased stretch (basic and acidic residues) spans 950–959 (NLSDARDEGT). Residues 1057 to 1071 (CSISQKGRKSSQSSI) show a composition bias toward polar residues. Composition is skewed to basic and acidic residues over residues 1115-1124 (LPCHTSDKLQ) and 1140-1157 (HTTERSPIKDLSVDDGRP). Positions 1266-1383 (KHLRFQQSKI…AGEEISYNYK (118 aa)) constitute an SET domain. Tyr1382 contacts S-adenosyl-L-methionine.

Belongs to the class V-like SAM-binding methyltransferase superfamily. Histone-lysine methyltransferase family. TRX/MLL subfamily. In terms of tissue distribution, expressed in the shoot and root apices, vascular tissues and mesophyll cells of rosette leaves.

The protein localises to the nucleus. It catalyses the reaction L-lysyl(4)-[histone H3] + 3 S-adenosyl-L-methionine = N(6),N(6),N(6)-trimethyl-L-lysyl(4)-[histone H3] + 3 S-adenosyl-L-homocysteine + 3 H(+). It carries out the reaction L-lysyl(36)-[histone H3] + 2 S-adenosyl-L-methionine = N(6),N(6)-dimethyl-L-lysyl(36)-[histone H3] + 2 S-adenosyl-L-homocysteine + 2 H(+). Its function is as follows. Histone methyltransferase involved in regulation of flowering time. Required for the expression of the flowering repressors FLC and MADS-box genes of the MAF family. Required for histone H3 dimethylation on 'Lys-36' H3K36me2 at the FLC locus. Required for histone H3 trimethylation on 'Lys-4' (H3K4me3) at the FLC locus. Prevents trimethylation on 'Lys-27' (H3K27me3) at the same locus. Involved in the control of seed dormancy and germination. The sequence is that of Histone-lysine N-methyltransferase ATXR7 from Arabidopsis thaliana (Mouse-ear cress).